We begin with the raw amino-acid sequence, 651 residues long: Bromodomain-containing protein 7 (651 aa).

Residue Lys-21 forms a Glycyl lysine isopeptide (Lys-Gly) (interchain with G-Cter in SUMO2) linkage. Residues 35-45 (TELSTGSSGHD) are compositionally biased toward polar residues. The tract at residues 35-132 (TELSTGSSGH…SSLAKQEEVE (98 aa)) is disordered. Over residues 47–57 (SLFEDKNDHDK) the composition is skewed to basic and acidic residues. Lys-52 is covalently cross-linked (Glycyl lysine isopeptide (Lys-Gly) (interchain with G-Cter in SUMO2)). The segment covering 58-69 (HKDRKRKKRKKG) has biased composition (basic residues). The Nuclear localization signal motif lies at 65–96 (KRKKGEKQIPGEEKGRKRRRVKEDKKKRDRDR). Positions 70–106 (EKQIPGEEKGRKRRRVKEDKKKRDRDRVENEAEKDLQ) are enriched in basic and acidic residues. Glycyl lysine isopeptide (Lys-Gly) (interchain with G-Cter in SUMO2) cross-links involve residues Lys-127, Lys-186, Lys-197, Lys-201, Lys-212, and Lys-241. A Bromo domain is found at 131–235 (VEQTPLQEAL…HSGMKILSQE (105 aa)). The disordered stretch occupies residues 253–312 (TRKQKDGTDTSQSGEDGGCWQREREDSGDAEAHASKSPSKENKKKDNDMLEDKFKSNNLE). Over residues 273-312 (QREREDSGDAEAHASKSPSKENKKKDNDMLEDKFKSNNLE) the composition is skewed to basic and acidic residues. Residues Ser-279 and Ser-289 each carry the phosphoserine modification. Glycyl lysine isopeptide (Lys-Gly) (interchain with G-Cter in SUMO2) cross-links involve residues Lys-305 and Lys-307. The residue at position 328 (Lys-328) is an N6-acetyllysine. Lys-344 is covalently cross-linked (Glycyl lysine isopeptide (Lys-Gly) (interchain with G-Cter in SUMO2)). The residue at position 380 (Ser-380) is a Phosphoserine. Lys-389 participates in a covalent cross-link: Glycyl lysine isopeptide (Lys-Gly) (interchain with G-Cter in SUMO2). Residue Ser-482 is modified to Phosphoserine. Thr-514 is subject to Phosphothreonine. The stretch at 536-567 (SEEAEIFQKKLDETTRLLRELQEAQNERLSTR) forms a coiled coil. Ser-621 carries the phosphoserine modification.

Interacts with TRIM24, PTPN13 and DVL1. Identified in a complex with SMARCA4/BRG1, SMARCC1/BAF155, SMARCE1/BAF57, DPF2/BAF45D and ARID2, subunits of the SWI/SNF-B (PBAF) chromatin remodeling complex. Interacts with IRF2 and HNRPUL1. Interacts (via N-terminus) with TP53. Interacts (via C-terminus) with EP300. Interacts with BRCA1. Interacts (via bromo domain) with histone H3 (via N-terminus) acetylated at 'Lys-14' (H3K14ac). Has low affinity for histone H3 acetylated at 'Lys-9' (H3K9ac). Has the highest affinity for histone H3 that is acetylated both at 'Lys-9' (H3K9ac) and at 'Lys-14' (H3K14ac). Has very low affinity for non-acetylated histone H3. Interacts (via bromo domain) with histone H4 (via N-terminus) acetylated at 'Lys-8' (H3K8ac) (in vitro).

It is found in the nucleus. The protein resides in the chromosome. Its function is as follows. Acts both as coactivator and as corepressor. May play a role in chromatin remodeling. Activator of the Wnt signaling pathway in a DVL1-dependent manner by negatively regulating the GSK3B phosphotransferase activity. Induces dephosphorylation of GSK3B at 'Tyr-216'. Down-regulates TRIM24-mediated activation of transcriptional activation by AR. Transcriptional corepressor that down-regulates the expression of target genes. Binds to target promoters, leading to increased histone H3 acetylation at 'Lys-9' (H3K9ac). Binds to the ESR1 promoter. Recruits BRCA1 and POU2F1 to the ESR1 promoter. Coactivator for TP53-mediated activation of transcription of a set of target genes. Required for TP53-mediated cell-cycle arrest in response to oncogene activation. Promotes acetylation of TP53 at 'Lys-382', and thereby promotes efficient recruitment of TP53 to target promoters. Inhibits cell cycle progression from G1 to S phase. The chain is Bromodomain-containing protein 7 (BRD7) from Pongo abelii (Sumatran orangutan).